The chain runs to 87 residues: Small ribosomal subunit protein bS20 (87 aa).

The segment at 1 to 20 (MANSAQARKRARTALKQRAH) is disordered. Residues 7–19 (ARKRARTALKQRA) are compositionally biased toward basic residues.

This sequence belongs to the bacterial ribosomal protein bS20 family.

Binds directly to 16S ribosomal RNA. The protein is Small ribosomal subunit protein bS20 of Chromobacterium violaceum (strain ATCC 12472 / DSM 30191 / JCM 1249 / CCUG 213 / NBRC 12614 / NCIMB 9131 / NCTC 9757 / MK).